Reading from the N-terminus, the 86-residue chain is Putative antitoxin VapB36 (86 aa).

Possibly the antitoxin component of a type II toxin-antitoxin (TA) system. Its cognate toxin is VapC36 (Potential). The sequence is that of Putative antitoxin VapB36 (vapB36) from Mycobacterium tuberculosis (strain CDC 1551 / Oshkosh).